Consider the following 100-residue polypeptide: Urease subunit gamma (100 aa).

The protein belongs to the urease gamma subunit family. Heterotrimer of UreA (gamma), UreB (beta) and UreC (alpha) subunits. Three heterotrimers associate to form the active enzyme.

It localises to the cytoplasm. The catalysed reaction is urea + 2 H2O + H(+) = hydrogencarbonate + 2 NH4(+). It participates in nitrogen metabolism; urea degradation; CO(2) and NH(3) from urea (urease route): step 1/1. In Acinetobacter baumannii (strain AB307-0294), this protein is Urease subunit gamma.